Here is a 221-residue protein sequence, read N- to C-terminus: 7-cyano-7-deazaguanine synthase (221 aa).

10-20 contributes to the ATP binding site; that stretch reads FSGGQDSTTCL. Zn(2+) contacts are provided by cysteine 186, cysteine 195, cysteine 198, and cysteine 201.

Belongs to the QueC family. As to quaternary structure, homodimer. It depends on Zn(2+) as a cofactor.

It catalyses the reaction 7-carboxy-7-deazaguanine + NH4(+) + ATP = 7-cyano-7-deazaguanine + ADP + phosphate + H2O + H(+). It participates in purine metabolism; 7-cyano-7-deazaguanine biosynthesis. Its function is as follows. Catalyzes the ATP-dependent conversion of 7-carboxy-7-deazaguanine (CDG) to 7-cyano-7-deazaguanine (preQ(0)). This Geobacillus kaustophilus (strain HTA426) protein is 7-cyano-7-deazaguanine synthase.